We begin with the raw amino-acid sequence, 196 residues long: Holliday junction branch migration complex subunit RuvA (196 aa).

Residues 1–63 (MIEYIKGEIV…EDAHLLFGFA (63 aa)) form a domain I region. Residues 64–142 (EKIERELFLL…PMESMAGNLP (79 aa)) form a domain II region. Positions 142–146 (PEASV) are flexible linker. A domain III region spans residues 147-196 (SNGAVTEEAVAALVMLGFQKAASQKAVSAILKGSPTLAVEQVIKTALRML).

It belongs to the RuvA family. Homotetramer. Forms an RuvA(8)-RuvB(12)-Holliday junction (HJ) complex. HJ DNA is sandwiched between 2 RuvA tetramers; dsDNA enters through RuvA and exits via RuvB. An RuvB hexamer assembles on each DNA strand where it exits the tetramer. Each RuvB hexamer is contacted by two RuvA subunits (via domain III) on 2 adjacent RuvB subunits; this complex drives branch migration. In the full resolvosome a probable DNA-RuvA(4)-RuvB(12)-RuvC(2) complex forms which resolves the HJ.

It is found in the cytoplasm. Its function is as follows. The RuvA-RuvB-RuvC complex processes Holliday junction (HJ) DNA during genetic recombination and DNA repair, while the RuvA-RuvB complex plays an important role in the rescue of blocked DNA replication forks via replication fork reversal (RFR). RuvA specifically binds to HJ cruciform DNA, conferring on it an open structure. The RuvB hexamer acts as an ATP-dependent pump, pulling dsDNA into and through the RuvAB complex. HJ branch migration allows RuvC to scan DNA until it finds its consensus sequence, where it cleaves and resolves the cruciform DNA. The polypeptide is Holliday junction branch migration complex subunit RuvA (Parabacteroides distasonis (strain ATCC 8503 / DSM 20701 / CIP 104284 / JCM 5825 / NCTC 11152)).